A 97-amino-acid polypeptide reads, in one-letter code: Putative defensin-like protein 237 (97 aa).

The first 23 residues, M1 to G23, serve as a signal peptide directing secretion. Cystine bridges form between C30–C94, C40–C71, C48–C84, and C69–C86.

This sequence belongs to the DEFL family.

The protein localises to the secreted. The sequence is that of Putative defensin-like protein 237 (SCRL21) from Arabidopsis thaliana (Mouse-ear cress).